Reading from the N-terminus, the 473-residue chain is Bestrophin-4 (473 aa).

Residues 1 to 31 (MTVSYTLKVAEARFGGFSGLLLRWRGSIYKL) lie on the Cytoplasmic side of the membrane. Residue alanine 10 coordinates Ca(2+). Residues 32 to 51 (LYKEFLLFGALYAVLSITYR) traverse the membrane as a helical segment. The Extracellular segment spans residues 52–60 (LLLTQEQRY). The chain crosses the membrane as a helical span at residues 61 to 82 (VYAQVARYCNRSADLIPLSFVL). The Cytoplasmic segment spans residues 83–237 (GFYVTLVVNR…DWISIPLVYT (155 aa)). Residues 238-255 (QVVTIAVYSFFALSLVGR) traverse the membrane as a helical segment. At 256-289 (QFVEPEAGAAKPQKLLKPGQEPAPALGDPDMYVP) the chain is on the extracellular side. The helical transmembrane segment at 290 to 303 (LTTLLQFFFYAGWL) threads the bilayer. At 304–473 (KVAEQIINPF…AESGDEALEP (170 aa)) the chain is on the cytoplasmic side. Ca(2+)-binding residues include glutamine 308, asparagine 311, aspartate 316, and aspartate 319. Disordered stretches follow at residues 379–408 (TFNL…PAAQ) and 428–473 (RNFG…ALEP). Residues 396-407 (ASPGSGRPAPAA) are compositionally biased toward low complexity. Over residues 445–461 (FRAEEGGDPEAAARIEE) the composition is skewed to basic and acidic residues. The span at 462 to 473 (ESAESGDEALEP) shows a compositional bias: acidic residues.

The protein belongs to the anion channel-forming bestrophin (TC 1.A.46) family. Calcium-sensitive chloride channel subfamily. In terms of tissue distribution, predominantly found in colon and the weakly in fetal brain, spinal cord, retina, lung, trachea, testis and placenta.

The protein resides in the cell membrane. It carries out the reaction chloride(in) = chloride(out). The enzyme catalyses hydrogencarbonate(in) = hydrogencarbonate(out). In terms of biological role, ligand-gated anion channel that allows the movement of anions across cell membranes when activated by Calcium (Ca2+). Mediates the movement of hydrogencarbonate and chloride. The sequence is that of Bestrophin-4 from Homo sapiens (Human).